Here is a 563-residue protein sequence, read N- to C-terminus: Pentatricopeptide repeat-containing protein At4g39620, chloroplastic (563 aa).

A chloroplast-targeting transit peptide spans 1–47 (MDYLLTSPSSLRFSDFISSIPKETDHKWLRFSVNLGDARRSTRTRIT). PPR repeat units follow at residues 132-166 (DNGV…GCRP), 167-197 (DASV…YLDK), 207-241 (NVVT…PVSP), 242-276 (DVYT…ECKP), 277-311 (DIIT…KEKP), 312-346 (TLPT…NYIP), 347-381 (SFIT…DRVL), 382-416 (KAST…RVHP), and 417-451 (DAST…GIVP). 2 disordered regions span residues 468-501 (PGSG…FQDK) and 520-551 (NLSG…NNMM). The segment covering 520 to 537 (NLSGHDKGSRDESRKPSQ) has biased composition (basic and acidic residues).

Belongs to the PPR family. P subfamily.

It localises to the plastid. Its subcellular location is the chloroplast. Its function is as follows. Essential for embryo development. In Arabidopsis thaliana (Mouse-ear cress), this protein is Pentatricopeptide repeat-containing protein At4g39620, chloroplastic.